The chain runs to 320 residues: Large ribosomal subunit protein uL10y (320 aa).

Positions 289-320 (AGGGAPAAAKVEEKEESDEEDYGGDFGLFDEE) are disordered. The span at 302–320 (KEESDEEDYGGDFGLFDEE) shows a compositional bias: acidic residues. Ser-305 is subject to Phosphoserine. Residue Tyr-310 is modified to Phosphotyrosine.

The protein belongs to the universal ribosomal protein uL10 family. P0 forms a pentameric complex by interaction with dimers of P1 and P2.

Ribosomal protein P0 is the functional equivalent of E.coli protein L10. The sequence is that of Large ribosomal subunit protein uL10y (RPP0B) from Arabidopsis thaliana (Mouse-ear cress).